The chain runs to 173 residues: Large ribosomal subunit protein bL9 (173 aa).

Belongs to the bacterial ribosomal protein bL9 family.

In terms of biological role, binds to the 23S rRNA. This is Large ribosomal subunit protein bL9 from Chlamydia felis (strain Fe/C-56) (Chlamydophila felis).